Reading from the N-terminus, the 419-residue chain is UDP-N-acetylglucosamine 1-carboxyvinyltransferase (419 aa).

22 to 23 provides a ligand contact to phosphoenolpyruvate; it reads KN. A UDP-N-acetyl-alpha-D-glucosamine-binding site is contributed by arginine 95. Cysteine 119 serves as the catalytic Proton donor. Cysteine 119 is modified (2-(S-cysteinyl)pyruvic acid O-phosphothioketal). UDP-N-acetyl-alpha-D-glucosamine is bound by residues 164–167, aspartate 308, and isoleucine 330; that span reads KVSV.

Belongs to the EPSP synthase family. MurA subfamily.

It is found in the cytoplasm. It carries out the reaction phosphoenolpyruvate + UDP-N-acetyl-alpha-D-glucosamine = UDP-N-acetyl-3-O-(1-carboxyvinyl)-alpha-D-glucosamine + phosphate. The protein operates within cell wall biogenesis; peptidoglycan biosynthesis. In terms of biological role, cell wall formation. Adds enolpyruvyl to UDP-N-acetylglucosamine. The protein is UDP-N-acetylglucosamine 1-carboxyvinyltransferase of Rickettsia conorii (strain ATCC VR-613 / Malish 7).